The chain runs to 389 residues: Homoserine O-acetyltransferase (389 aa).

The disordered stretch occupies residues 1-21 (MAALRAGKTNNEADQPSSPVL). Positions 8–18 (KTNNEADQPSS) are enriched in polar residues. The AB hydrolase-1 domain occupies 56 to 366 (NAILVCHALT…DRGHDAFLLD (311 aa)). Residue S161 is the Nucleophile of the active site. Residue R231 coordinates substrate. Catalysis depends on residues D327 and H360. D361 is a substrate binding site.

Belongs to the AB hydrolase superfamily. MetX family. Homodimer.

It localises to the cytoplasm. It carries out the reaction L-homoserine + acetyl-CoA = O-acetyl-L-homoserine + CoA. It participates in amino-acid biosynthesis; L-methionine biosynthesis via de novo pathway; O-acetyl-L-homoserine from L-homoserine: step 1/1. Its function is as follows. Transfers an acetyl group from acetyl-CoA to L-homoserine, forming acetyl-L-homoserine. The chain is Homoserine O-acetyltransferase from Mesorhizobium japonicum (strain LMG 29417 / CECT 9101 / MAFF 303099) (Mesorhizobium loti (strain MAFF 303099)).